A 93-amino-acid chain; its full sequence is Small ribosomal subunit protein uS19 (93 aa).

The segment at 73-93 (EFSPTRTYRGHDKKDKKIQKK) is disordered.

The protein belongs to the universal ribosomal protein uS19 family.

Its function is as follows. Protein S19 forms a complex with S13 that binds strongly to the 16S ribosomal RNA. The chain is Small ribosomal subunit protein uS19 from Phytoplasma mali (strain AT).